Reading from the N-terminus, the 355-residue chain is Peptide chain release factor 1 (355 aa).

An N5-methylglutamine modification is found at glutamine 231.

This sequence belongs to the prokaryotic/mitochondrial release factor family. Methylated by PrmC. Methylation increases the termination efficiency of RF1.

Its subcellular location is the cytoplasm. Its function is as follows. Peptide chain release factor 1 directs the termination of translation in response to the peptide chain termination codons UAG and UAA. This is Peptide chain release factor 1 from Aliarcobacter butzleri (strain RM4018) (Arcobacter butzleri).